The chain runs to 800 residues: Nucleolar complex protein 3 homolog (800 aa).

Disordered regions lie at residues K27 to D93 and G160 to E187. Basic residues predominate over residues K40–Q51. A compositionally biased stretch (basic and acidic residues) spans N66–R78. Residues E79 to D93 are compositionally biased toward acidic residues. The segment covering G160–N174 has biased composition (basic and acidic residues). The segment covering K175–E187 has biased composition (acidic residues). K333 is covalently cross-linked (Glycyl lysine isopeptide (Lys-Gly) (interchain with G-Cter in SUMO2)). The stretch at K451 to L490 forms a coiled coil. A Phosphoserine modification is found at S787.

It belongs to the CBF/MAK21 family. Expressed in colon, heart, kidney, liver, lung, placenta, skeletal muscle, small intestine, spleen and thymus.

The protein localises to the nucleus. It localises to the nucleolus. It is found in the nucleus speckle. May be required for adipogenesis. The chain is Nucleolar complex protein 3 homolog (NOC3L) from Homo sapiens (Human).